The following is a 6061-amino-acid chain: Intermembrane lipid transfer protein vps13B (6061 aa).

Positions 2–115 constitute a Chorein N-terminal domain; it reads FESLVADIIA…QLELKRKKLE (114 aa). Disordered regions lie at residues 590-623, 803-828, 1386-1414, 1604-1644, 2747-2784, 2950-2972, 3364-3401, 3855-3876, 4011-4068, 4107-4132, 4262-4297, 4321-4442, 4601-4631, 4753-4797, 4861-4882, 5003-5030, and 5372-5429; these read PKYKRHQENKENKENQENQENENKNEINNNNNNK, DIKNSDNNNNNISDNINNNNNINNKN, QQQQQQEEEQQQKEEEQHGGEFDLQNVSS, SSNN…GTLS, QTNQNNQKNRNPFKFYDQSGASNNNNDNDNDEYDEDQE, GLNNSFDLNNSGGGNNNNNNSST, LNRNSNSDSDNEENHNNNQNNQNNIDDDDGDGDDDDDD, QQQQPIINGDYGGIDSNNRNKK, QQQQ…FKNN, ELEKKKRERKENSKSKSLVAPDRPDE, NSSNNNNNNNNNGLSASTSNNLNNTMNDSNNNYNGR, SQSI…TSPG, TSSPSSSSNKVNNNYNNMDDEEDKKISKKSL, NNNN…TQEF, NAGGSSHYSSNGSNGSFSSISQ, LATKGKDNNKDNSNNNNNNNNNNNDGIE, and NINN…IGQD. The segment covering 595 to 614 has biased composition (basic and acidic residues); that stretch reads HQENKENKENQENQENENKN. The span at 1395-1406 shows a compositional bias: basic and acidic residues; sequence QQQKEEEQHGGE. Polar residues predominate over residues 2747–2756; that stretch reads QTNQNNQKNR. Residues 2774–2784 show a composition bias toward acidic residues; it reads NDNDEYDEDQE. Over residues 3388–3401 the composition is skewed to acidic residues; the sequence is IDDDDGDGDDDDDD. Residues 4015-4024 show a composition bias toward basic and acidic residues; the sequence is QEKEKEIEKE. The segment covering 4031–4040 has biased composition (low complexity); it reads LKNNNNISIN. A compositionally biased stretch (acidic residues) spans 4041–4057; that stretch reads DNDDDDDDDDNDNDENN. The segment covering 4058–4068 has biased composition (low complexity); the sequence is NENYEFNFKNN. The span at 4107–4120 shows a compositional bias: basic and acidic residues; the sequence is ELEKKKRERKENSK. Composition is skewed to low complexity over residues 4330–4383 and 4399–4429; these read TTTT…VGSN and NNNNNNNNNNNNNNNNNNNNNNNNNNNNNNN. A compositionally biased stretch (polar residues) spans 4430–4441; it reads SNDNQVNFSTSP. Low complexity-rich tracts occupy residues 4601–4617 and 4753–4784; these read TSSPSSSSNKVNNNYNN and NNNNNNNDVNNNNTNNNNNNNNNNNNNKSNEN. Over residues 4785–4794 the composition is skewed to polar residues; it reads SQDQPPSIKT. Low complexity-rich tracts occupy residues 5013–5030 and 5372–5384; these read DNSNNNNNNNNNNNDGIE and NINNNNNNLNNDN. The segment covering 5385-5409 has biased composition (basic and acidic residues); the sequence is NKNKNNNDKNKNNDKNNKNNNDKNN. The segment covering 5410–5421 has biased composition (low complexity); the sequence is NDNNNNNNNNNN.

This sequence belongs to the VPS13 family.

Its subcellular location is the membrane. Functionally, mediates the transfer of lipids between membranes at organelle contact sites. This Dictyostelium discoideum (Social amoeba) protein is Intermembrane lipid transfer protein vps13B (vps13B).